Reading from the N-terminus, the 645-residue chain is MAGDTGANPLFLGWVKEWWDTAREHNTKGAPTYKKAYNSLKACPLTFQHPSELQVLNGFGPTISQRLTDRLKQYCEENGLPMPKHPKRKRTLELESALAAAGAVQDEQPPPPKRARTARPYVPKLNSGAYALLMALSELGPKEFMDKTTLIAKAQPYSEHSFTVPTMANKSYTAWDSMKTLEQKELVWLRGLPSKRYSLTDEGWEVVKRMKEAQNLVDGVAGSANTSRNAIASGSGTSNPNRSENVNPNRQDSGVKRESRYTPLDLKPFVTTTATPERPLQPKPHTANSEYSIIIDSDDEDPKYDEEDRKPIIRDTTNRDYIDLVADGDSVPDESNLPHFTPIRLAPGSFTVELVLDTREVQAKNNRDHIQEELSKLGVRPVMRSLELGDVLWIAKCKQPGWLNRLGAEGDEVVLDYIVERKRLDDLIGSIKDGRFREQKYRLKRSGMKNVVYIIENYNIDMDIRRQYQDAMDTAMASIQVVNGYFLKKTDTIAESIRYLAAVTYMLKEIYESKPLFVIPTQVLTAKNYLPLVKHLREKEPSRGYYISYPAFASLVSKSEMMTLKDVFIKMLMCIRRLSGEKAIEIQKVWKTPYQLVKAFEACGSDENGKKKQKVLVMSMLSHLVDRRNVDKGLSERIADVWGFL.

2 disordered regions span residues 98–119 (LAAAGAVQDEQPPPPKRARTAR) and 219–310 (GVAG…EDRK). Positions 223–252 (SANTSRNAIASGSGTSNPNRSENVNPNRQD) are enriched in polar residues. Residues 296–305 (DSDDEDPKYD) are compositionally biased toward acidic residues. Residues 353 to 459 (ELVLDTREVQ…NVVYIIENYN (107 aa)) enclose the ERCC4 domain.

This sequence belongs to the XPF family. In terms of assembly, interacts with eme-1. Mg(2+) serves as cofactor.

Its subcellular location is the nucleus. Functionally, interacts with eme-1 to form a DNA structure-specific endonuclease with substrate preference for branched DNA structures with a 5'-end at the branch nick. Typical substrates include 3'-flap structures, D-loops, replication forks and nicked Holliday junctions. May be required in mitosis for the processing of stalled or collapsed replication fork intermediates. May be required in meiosis for the repair of meiosis-specific double strand breaks subsequent to single-end invasion (SEI). This is Crossover junction endonuclease mus-81 (mus-81) from Neurospora crassa (strain ATCC 24698 / 74-OR23-1A / CBS 708.71 / DSM 1257 / FGSC 987).